The primary structure comprises 60 residues: Large ribosomal subunit protein bL32 (60 aa).

A disordered region spans residues 1 to 60 (MAVQQNKKSPSKRGMHRSHNALTVPGIAVESTTGETHLRHHISPTGFYRGRKVLKTKSEA). 2 stretches are compositionally biased toward basic residues: residues 9 to 19 (SPSKRGMHRSH) and 49 to 60 (RGRKVLKTKSEA).

This sequence belongs to the bacterial ribosomal protein bL32 family.

The protein is Large ribosomal subunit protein bL32 of Polaromonas sp. (strain JS666 / ATCC BAA-500).